The primary structure comprises 442 residues: UDP-N-acetylmuramate--L-alanine ligase (442 aa).

109 to 115 serves as a coordination point for ATP; the sequence is GAHGKTS.

It belongs to the MurCDEF family.

It localises to the cytoplasm. The enzyme catalyses UDP-N-acetyl-alpha-D-muramate + L-alanine + ATP = UDP-N-acetyl-alpha-D-muramoyl-L-alanine + ADP + phosphate + H(+). It participates in cell wall biogenesis; peptidoglycan biosynthesis. Functionally, cell wall formation. This is UDP-N-acetylmuramate--L-alanine ligase from Streptococcus pyogenes serotype M6 (strain ATCC BAA-946 / MGAS10394).